Consider the following 101-residue polypeptide: Ascorbate-specific PTS system EIIB component (101 aa).

The 94-residue stretch at 3–96 (VRILAVCGNG…KLLEVIKAHF (94 aa)) folds into the PTS EIIB type-2 domain. Residue cysteine 9 is the Phosphocysteine intermediate of the active site. Cysteine 9 is modified (phosphocysteine).

The protein localises to the cytoplasm. It carries out the reaction N(pros)-phospho-L-histidyl-[protein] + L-ascorbate(out) = L-ascorbate 6-phosphate(in) + L-histidyl-[protein]. The phosphoenolpyruvate-dependent sugar phosphotransferase system (sugar PTS), a major carbohydrate active transport system, catalyzes the phosphorylation of incoming sugar substrates concomitantly with their translocation across the cell membrane. The enzyme II UlaABC PTS system is involved in ascorbate transport. This chain is Ascorbate-specific PTS system EIIB component (ulaB), found in Shigella sonnei (strain Ss046).